Consider the following 304-residue polypeptide: Protease HtpX homolog (304 aa).

Helical transmembrane passes span 14 to 34 (VFII…IGII) and 39 to 59 (YLNG…IMVM). H144 is a Zn(2+) binding site. Residue E145 is part of the active site. H148 serves as a coordination point for Zn(2+). The next 2 membrane-spanning stretches (helical) occupy residues 159–179 (IAIA…RMIF) and 202–222 (AIIY…ATAI). Residue E231 participates in Zn(2+) binding.

It belongs to the peptidase M48B family. Zn(2+) is required as a cofactor.

The protein localises to the cell membrane. This Listeria monocytogenes serotype 4a (strain HCC23) protein is Protease HtpX homolog.